Consider the following 135-residue polypeptide: MMLESLARVFKVQLPAYLKRLPIPDSIAGFIRLTVLEWLRLLPFLGVLALLGYLAIRPFLPKKKQQKDSLINLKIQKENPKVVNEINIEDLHLAKAAYCRCWRSKTFPVCDGSHNKHNELTGDNVGPLILKKKEV.

The Lumenal portion of the chain corresponds to 1–37 (MMLESLARVFKVQLPAYLKRLPIPDSIAGFIRLTVLE). A helical transmembrane segment spans residues 38-60 (WLRLLPFLGVLALLGYLAIRPFL). Over 61–135 (PKKKQQKDSL…GPLILKKKEV (75 aa)) the chain is Cytoplasmic. 4 residues coordinate [2Fe-2S] cluster: C99, C101, C110, and H114.

This sequence belongs to the CISD protein family. CISD2 subfamily. As to quaternary structure, homodimer. It depends on [2Fe-2S] cluster as a cofactor.

The protein localises to the endoplasmic reticulum membrane. Its subcellular location is the mitochondrion outer membrane. Regulator of autophagy that contributes to antagonize becn1-mediated cellular autophagy at the endoplasmic reticulum. Participates in the interaction of bcl2 with becn1 and is required for bcl2-mediated depression of endoplasmic reticulum Ca(2+) stores during autophagy. The chain is CDGSH iron-sulfur domain-containing protein 2B (cisd2-b) from Xenopus laevis (African clawed frog).